The primary structure comprises 481 residues: Aspartyl/glutamyl-tRNA(Asn/Gln) amidotransferase subunit B (481 aa).

It belongs to the GatB/GatE family. GatB subfamily. In terms of assembly, heterotrimer of A, B and C subunits.

It carries out the reaction L-glutamyl-tRNA(Gln) + L-glutamine + ATP + H2O = L-glutaminyl-tRNA(Gln) + L-glutamate + ADP + phosphate + H(+). The enzyme catalyses L-aspartyl-tRNA(Asn) + L-glutamine + ATP + H2O = L-asparaginyl-tRNA(Asn) + L-glutamate + ADP + phosphate + 2 H(+). Functionally, allows the formation of correctly charged Asn-tRNA(Asn) or Gln-tRNA(Gln) through the transamidation of misacylated Asp-tRNA(Asn) or Glu-tRNA(Gln) in organisms which lack either or both of asparaginyl-tRNA or glutaminyl-tRNA synthetases. The reaction takes place in the presence of glutamine and ATP through an activated phospho-Asp-tRNA(Asn) or phospho-Glu-tRNA(Gln). The sequence is that of Aspartyl/glutamyl-tRNA(Asn/Gln) amidotransferase subunit B from Pseudomonas fluorescens (strain SBW25).